A 473-amino-acid chain; its full sequence is 3-isopropylmalate dehydratase large subunit (473 aa).

Residues Cys-348, Cys-413, and Cys-416 each coordinate [4Fe-4S] cluster.

It belongs to the aconitase/IPM isomerase family. LeuC type 1 subfamily. As to quaternary structure, heterodimer of LeuC and LeuD. Requires [4Fe-4S] cluster as cofactor.

It carries out the reaction (2R,3S)-3-isopropylmalate = (2S)-2-isopropylmalate. Its pathway is amino-acid biosynthesis; L-leucine biosynthesis; L-leucine from 3-methyl-2-oxobutanoate: step 2/4. Functionally, catalyzes the isomerization between 2-isopropylmalate and 3-isopropylmalate, via the formation of 2-isopropylmaleate. This chain is 3-isopropylmalate dehydratase large subunit, found in Parvibaculum lavamentivorans (strain DS-1 / DSM 13023 / NCIMB 13966).